The primary structure comprises 59 residues: Anti-inflammatory peptide amregulin (59 aa).

The N-terminal stretch at 1–19 is a signal peptide; it reads MKLHMLNMLNCLLLTVCDG.

As to expression, salivary glands.

The protein resides in the secreted. In terms of biological role, anti-inflammatory peptide that may facilitate successful blood feeding of ticks and may lead to immunotolerance in its host. Inhibits the secretion of inflammatory factors in rat splenocytes, such as tumor necrosis factor-alpha (TNF), interleukin-1, interleukin-8 (CXCL8) and interferon-gamma (IFNG). In addition, shows strong free radical scavenging and antioxidant activities in vitro. In vivo, inhibits adjuvant-induced paw inflammation in mouse models. The sequence is that of Anti-inflammatory peptide amregulin from Amblyomma variegatum (Tropical bont tick).